We begin with the raw amino-acid sequence, 270 residues long: WGALGHATVAYVAQHYVSPEAASWAQGILGSSSSSYLASIASWADEYRLTSAGKWSASLHFIDAEDNPPTNCNVDYERDCGSSGCSISAIANYTQRVSDSSLSSENHAEALRFLVHFIGDMTQPLHDEAYAVGGNKINVTFDGYHDNLHSDWDTYMPQKLIGGHALSDAESWAKTLVQNIESGNYTAQATGWIKGDNISEPITTATRWASDANALVCTVVMPHGAAALQTGDLYPTYYDSVIDTIELQIAKGGYRLANWINEIHGSEIAK.

Residues tryptophan 1, histidine 6, histidine 15, aspartate 45, and histidine 60 each coordinate a divalent metal cation. Residue 1-6 (WGALGH) participates in substrate binding. Substrate-binding positions include 45–51 (DEYRLTS), 60–63 (HFID), and 73–78 (NVDYER). 2 disulfide bridges follow: cysteine 72–cysteine 217 and cysteine 80–cysteine 85. A substrate-binding site is contributed by asparagine 92. The N-linked (GlcNAc...) asparagine glycan is linked to asparagine 92. A divalent metal cation is bound by residues histidine 116, aspartate 120, and histidine 126. Residues 116-164 (HFIGDMTQPLHDEAYAVGGNKINVTFDGYHDNLHSDWDTYMPQKLIGGH) are substrate binding. An N-linked (GlcNAc...) asparagine glycan is attached at asparagine 138. Residues histidine 149 and aspartate 153 each coordinate a divalent metal cation. N-linked (GlcNAc...) asparagine glycosylation is found at asparagine 184 and asparagine 197.

This sequence belongs to the nuclease type I family. Zn(2+) serves as cofactor.

Its subcellular location is the secreted. It carries out the reaction a ribonucleoside 3'-phosphate + H2O = a ribonucleoside + phosphate. Functionally, hydrolyzes only single-stranded DNA and RNA without apparent specificity for bases. This Penicillium sp protein is Nuclease PA3.